Here is a 174-residue protein sequence, read N- to C-terminus: Large ribosomal subunit protein uL10 (174 aa).

This sequence belongs to the universal ribosomal protein uL10 family. Part of the ribosomal stalk of the 50S ribosomal subunit. The N-terminus interacts with L11 and the large rRNA to form the base of the stalk. The C-terminus forms an elongated spine to which L12 dimers bind in a sequential fashion forming a multimeric L10(L12)X complex.

In terms of biological role, forms part of the ribosomal stalk, playing a central role in the interaction of the ribosome with GTP-bound translation factors. This chain is Large ribosomal subunit protein uL10, found in Bordetella petrii (strain ATCC BAA-461 / DSM 12804 / CCUG 43448).